The sequence spans 141 residues: HTH-type transcriptional repressor NsrR (141 aa).

An HTH rrf2-type domain is found at 2 to 129 (QLTSFTDYGL…DNYTLADLVE (128 aa)). A DNA-binding region (H-T-H motif) is located at residues 28-51 (ISEVTDVYGVSRNHMVKIINQLSR). The [2Fe-2S] cluster site is built by Cys-91, Cys-96, and Cys-102.

The cofactor is [2Fe-2S] cluster.

Nitric oxide-sensitive repressor of genes involved in protecting the cell against nitrosative stress. May require iron for activity. The chain is HTH-type transcriptional repressor NsrR from Escherichia coli O157:H7 (strain EC4115 / EHEC).